Here is a 689-residue protein sequence, read N- to C-terminus: Elongation factor G (689 aa).

Residues 8–282 (KKTRNIGIMA…AVIDYLPSPV (275 aa)) enclose the tr-type G domain. GTP is bound by residues 17–24 (AHIDAGKT), 81–85 (DTPGH), and 135–138 (NKMD).

This sequence belongs to the TRAFAC class translation factor GTPase superfamily. Classic translation factor GTPase family. EF-G/EF-2 subfamily.

It is found in the cytoplasm. In terms of biological role, catalyzes the GTP-dependent ribosomal translocation step during translation elongation. During this step, the ribosome changes from the pre-translocational (PRE) to the post-translocational (POST) state as the newly formed A-site-bound peptidyl-tRNA and P-site-bound deacylated tRNA move to the P and E sites, respectively. Catalyzes the coordinated movement of the two tRNA molecules, the mRNA and conformational changes in the ribosome. The polypeptide is Elongation factor G (Halothermothrix orenii (strain H 168 / OCM 544 / DSM 9562)).